We begin with the raw amino-acid sequence, 1325 residues long: ATP-binding cassette sub-family C member 4 (1325 aa).

A run of 6 helical transmembrane segments spans residues Leu-93–Leu-113, Gly-136–Phe-156, Phe-205–Val-225, Val-227–Leu-247, Ala-322–Leu-342, and Val-351–Ser-371. An ABC transmembrane type-1 1 domain is found at Leu-93–Ser-377. In terms of domain architecture, ABC transporter 1 spans Val-410–Lys-633. Gly-445–Ser-452 is an ATP binding site. 2 positions are modified to phosphothreonine: Thr-646 and Thr-648. The segment covering Ala-657 to Pro-667 has biased composition (polar residues). A disordered region spans residues Ala-657–Ser-690. Residues Ser-664 and Ser-668 each carry the phosphoserine modification. 5 consecutive transmembrane segments (helical) span residues Ser-710–Leu-730, Leu-761–Ala-781, Leu-849–Val-869, Ala-954–Leu-974, and Gly-977–Val-997. Residues Ile-714–Asn-1005 form the ABC transmembrane type-1 2 domain. Residues Ile-1041–Gln-1274 enclose the ABC transporter 2 domain. Gly-1075–Ser-1082 lines the ATP pocket. The PDZ-binding motif lies at Glu-1322 to Leu-1325.

In terms of assembly, interacts (via PDZ-binding motif) with SNX27 (via PDZ domain); this interaction accelerates MRP4 internalization. Requires Mg(2+) as cofactor. Post-translationally, N-glycosylated; leading to substrate-selective effects on its transport activity.

It localises to the basolateral cell membrane. It is found in the apical cell membrane. It catalyses the reaction ATP + H2O + xenobioticSide 1 = ADP + phosphate + xenobioticSide 2.. It carries out the reaction an S-substituted glutathione(in) + ATP + H2O = an S-substituted glutathione(out) + ADP + phosphate + H(+). The catalysed reaction is 17beta-estradiol 17-O-(beta-D-glucuronate)(in) + ATP + H2O = 17beta-estradiol 17-O-(beta-D-glucuronate)(out) + ADP + phosphate + H(+). The enzyme catalyses dehydroepiandrosterone 3-sulfate(in) + ATP + H2O = dehydroepiandrosterone 3-sulfate(out) + ADP + phosphate + H(+). It catalyses the reaction leukotriene C4(in) + ATP + H2O = leukotriene C4(out) + ADP + phosphate + H(+). It carries out the reaction leukotriene B4(in) + ATP + H2O = leukotriene B4(out) + ADP + phosphate + H(+). The catalysed reaction is urate(in) + ATP + H2O = urate(out) + ADP + phosphate + H(+). The enzyme catalyses 3',5'-cyclic GMP(in) + ATP + H2O = 3',5'-cyclic GMP(out) + ADP + phosphate + H(+). It catalyses the reaction 3',5'-cyclic AMP(in) + ATP + H2O = 3',5'-cyclic AMP(out) + ADP + phosphate + H(+). It carries out the reaction prostaglandin E2(in) + ATP + H2O = prostaglandin E2(out) + ADP + phosphate + H(+). The catalysed reaction is prostaglandin E1(in) + ATP + H2O = prostaglandin E1(out) + ADP + phosphate + H(+). The enzyme catalyses glycodeoxycholate(in) + glutathione(in) + ATP + H2O = glycodeoxycholate(out) + glutathione(out) + ADP + phosphate + H(+). It catalyses the reaction cholate(in) + glutathione(in) + ATP + H2O = cholate(out) + glutathione(out) + ADP + phosphate + H(+). It carries out the reaction glycocholate(in) + glutathione(in) + ATP + H2O = glycocholate(out) + glutathione(out) + ADP + phosphate + H(+). The catalysed reaction is taurocholate(in) + glutathione(in) + ATP + H2O = taurocholate(out) + glutathione(out) + ADP + phosphate + H(+). The enzyme catalyses glycochenodeoxycholate(in) + glutathione(in) + ATP + H2O = glycochenodeoxycholate(out) + glutathione(out) + ADP + phosphate + H(+). It catalyses the reaction taurochenodeoxycholate(in) + glutathione(in) + ATP + H2O = taurochenodeoxycholate(out) + glutathione(out) + ADP + phosphate + H(+). It carries out the reaction glycoursodeoxycholate(in) + glutathione(in) + ATP + H2O = glycoursodeoxycholate(out) + glutathione(out) + ADP + phosphate + H(+). The catalysed reaction is tauroursodeoxycholate(in) + glutathione(in) + ATP + H2O = tauroursodeoxycholate(out) + glutathione(out) + ADP + phosphate + H(+). In terms of biological role, ATP-dependent transporter of the ATP-binding cassette (ABC) family that actively extrudes physiological compounds and xenobiotics from cells. Transports a range of endogenous molecules that have a key role in cellular communication and signaling, including cyclic nucleotides such as cyclic AMP (cAMP) and cyclic GMP (cGMP), bile acids, steroid conjugates, urate, and prostaglandins. Also mediates the ATP-dependent efflux of glutathione conjugates such as leukotriene C4 (LTC4) and leukotriene B4 (LTB4). The presence of GSH is necessary for the ATP-dependent transport of LTB4, whereas GSH is not required for the transport of LTC4. Mediates the cotransport of bile acids with reduced glutathione (GSH). Transports a wide range of drugs and their metabolites, including anticancer, antiviral and antibiotics molecules. Confers resistance to anticancer agents. The protein is ATP-binding cassette sub-family C member 4 of Mus musculus (Mouse).